A 339-amino-acid polypeptide reads, in one-letter code: Undifferentiated embryonic cell transcription factor 1 (339 aa).

2 disordered regions span residues 1 to 62 (MLLR…QRTP) and 144 to 270 (MGLL…QVAP). 4 positions are modified to phosphoserine: Ser-15, Ser-18, Ser-48, and Ser-54. The span at 154–170 (RVRRRSTGPGRPQRRGR) shows a compositional bias: basic residues. 2 stretches are compositionally biased toward low complexity: residues 171-193 (SSLSALAPAPAPVEQEAELPLAA) and 218-229 (TSSPPLTSTDTL). Residues 261-270 (GRASSPQVAP) show a composition bias toward polar residues. The segment at 279 to 310 (QTLTHLGDISTVLGPLRDQLSTLNQHVEHLRG) is leucine-zipper.

As to quaternary structure, binds to the N-terminal region of ATF2. Associates with the TFIID complex through interaction with TBP. In terms of processing, phosphorylated. As to expression, expressed mainly in pluripotent cells with expression rapidly down-regulated upon cell differentiation.

It localises to the nucleus. Functionally, acts as a transcriptional coactivator of ATF2. This is Undifferentiated embryonic cell transcription factor 1 from Mus musculus (Mouse).